We begin with the raw amino-acid sequence, 581 residues long: Serine/threonine-protein kinase PINK1, mitochondrial (581 aa).

Residues 1–77 constitute a mitochondrion transit peptide; the sequence is MAVRQALGRG…RFFRQSVAGL (77 aa). The Mitochondrial intermembrane portion of the chain corresponds to 78-93; the sequence is AARLQRQFVVRAWGCA. The chain crosses the membrane as a helical span at residues 94-110; sequence GPCGRAVFLAFGLGLGL. Residues 111–117 form a required for outer membrane localization region; the sequence is IEEKQAE. Residues 111–581 lie on the Cytoplasmic side of the membrane; sequence IEEKQAESRR…LLLCSWRAAL (471 aa). The Protein kinase domain occupies 156 to 511; the sequence is YLIGQSIGKG…VAANVLHLSL (356 aa). ATP contacts are provided by residues 162–170 and Lys186; that span reads IGKGCSAAV. The interval 189–208 is disordered; it reads GLLPGRGPGTSAPGEGQERA. Residue Ser228 is modified to Phosphoserine; by autocatalysis. Asp362 functions as the Proton acceptor in the catalytic mechanism. The residue at position 402 (Ser402) is a Phosphoserine; by autocatalysis.

The protein belongs to the protein kinase superfamily. Ser/Thr protein kinase family. In terms of assembly, upon mitochondrial depolarization, it forms a supercomplex with TOM and TIM23 complexes. PINK1-TOM-TIM23 supercomplex formation requires PINK1 interaction with TOMM20 and TOMM70 and is critical for PINK1 stabilization at the outer mitochondrial membrane, kinase activation and downstream mitophagy. Upon mitochondrial depolarization, interacts with TIMM23; the interaction is required for PINK1 accumulation at the outer mitochondrial membrane, kinase activation by autophosphorylation and PRKN recruitement to mitochondria. Interacts with PRKN. Interacts with FBXO7. Forms a complex with PRKN and PARK7. Interacts with NENF. It depends on Mg(2+) as a cofactor. Proteolytically cleaved. In healthy cells, the precursor is continuously imported into the inner mitochondrial membrane (IMM), where it is proteolytically cleaved by mitochondrial-processing peptidase (MPP) and then undergoes further proteolytic cleavage by PARL or AFG3L2 to give rise to the 52 kDa short form. The 52 kDa short form is then released into the cytosol where it rapidly undergoes proteasome-dependent degradation. In unhealthy cells, when cellular stress conditions lead to the loss of mitochondrial membrane potential, mitochondrial import is impaired leading to the precursor accumulating on the outer mitochondrial membrane (OMM). If accumulation at the OMM fails and it is imported into the depolarized mitochondria, it undergoes cleavage by the IMM protease OMA1, promoting its subsequent degradation by the proteasome. In terms of processing, autophosphorylated. Loss of mitochondrial membrane potential results in the precursor accumulating on the outer mitochondrial membrane (OMM) where it is activated by autophosphorylation. Autophosphorylation at Ser-228 and Ser-402 is sufficient and essential for selective recruitment of PRKN to depolarized mitochondria, via PINK1-dependent phosphorylation of ubiquitin and maybe PRKN. In terms of tissue distribution, highly expressed in heart, skeletal muscle and testis, and at lower levels in brain, placenta, liver, kidney, pancreas, prostate, ovary and small intestine. Present in the embryonic testis from an early stage of development.

The protein resides in the mitochondrion outer membrane. Its subcellular location is the mitochondrion inner membrane. It localises to the cytoplasm. It is found in the cytosol. It catalyses the reaction L-seryl-[protein] + ATP = O-phospho-L-seryl-[protein] + ADP + H(+). The enzyme catalyses L-threonyl-[protein] + ATP = O-phospho-L-threonyl-[protein] + ADP + H(+). Serine/threonine-protein kinase which acts as a sensor of mitochondrial damage and protects against mitochondrial dysfunction during cellular stress. It phosphorylates mitochondrial proteins to coordinate mitochondrial quality control mechanisms that remove and replace dysfunctional mitochondrial components. Depending on the severity of mitochondrial damage, activity ranges from preventing apoptosis and stimulating mitochondrial biogenesis to eliminating severely damaged mitochondria via PINK1-PRKN-dependent mitophagy. When cellular stress results in irreversible mitochondrial damage, PINK1 accumulates at the outer mitochondrial membrane (OMM) where it phosphorylates pre-existing polyubiquitin chains at 'Ser-65', recruits PRKN from the cytosol to the OMM and activates PRKN by phosphorylation at 'Ser-65'; activated PRKN then ubiquinates VDAC1 and other OMM proteins to initiate mitophagy. The PINK1-PRKN pathway also promotes fission of damaged mitochondria through phosphorylation and PRKN-dependent degradation of mitochondrial proteins involved in fission such as MFN2. This prevents the refusion of unhealthy mitochondria with the mitochondrial network or initiates mitochondrial fragmentation facilitating their later engulfment by autophagosomes. Also promotes mitochondrial fission independently of PRKN and ATG7-mediated mitophagy, via the phosphorylation and activation of DNM1L. Regulates motility of damaged mitochondria by promoting the ubiquitination and subsequent degradation of MIRO1 and MIRO2; in motor neurons, this likely inhibits mitochondrial intracellular anterograde transport along the axons which probably increases the chance of the mitochondria undergoing mitophagy in the soma. Required for ubiquinone reduction by mitochondrial complex I by mediating phosphorylation of complex I subunit NDUFA10. Phosphorylates LETM1, positively regulating its mitochondrial calcium transport activity. The polypeptide is Serine/threonine-protein kinase PINK1, mitochondrial (PINK1) (Homo sapiens (Human)).